Reading from the N-terminus, the 496-residue chain is Glycerol kinase (496 aa).

Thr12 provides a ligand contact to ADP. The ATP site is built by Thr12, Thr13, and Ser14. Thr12 contacts sn-glycerol 3-phosphate. Residue Arg16 coordinates ADP. Sn-glycerol 3-phosphate-binding residues include Arg82, Glu83, and Tyr134. Residues Arg82, Glu83, and Tyr134 each coordinate glycerol. A Phosphohistidine; by HPr modification is found at His230. Asp244 contributes to the sn-glycerol 3-phosphate binding site. Positions 244 and 245 each coordinate glycerol. Residues Thr266 and Gly309 each coordinate ADP. Positions 266, 309, 313, and 410 each coordinate ATP. Residues Gly410 and Asn414 each contribute to the ADP site.

It belongs to the FGGY kinase family. Homotetramer and homodimer (in equilibrium). In terms of processing, the phosphoenolpyruvate-dependent sugar phosphotransferase system (PTS), including enzyme I, and histidine-containing protein (HPr) are required for the phosphorylation, which leads to the activation of the enzyme.

It carries out the reaction glycerol + ATP = sn-glycerol 3-phosphate + ADP + H(+). It functions in the pathway polyol metabolism; glycerol degradation via glycerol kinase pathway; sn-glycerol 3-phosphate from glycerol: step 1/1. Activated by phosphorylation and inhibited by fructose 1,6-bisphosphate (FBP). Key enzyme in the regulation of glycerol uptake and metabolism. Catalyzes the phosphorylation of glycerol to yield sn-glycerol 3-phosphate. The polypeptide is Glycerol kinase (Bacillus cytotoxicus (strain DSM 22905 / CIP 110041 / 391-98 / NVH 391-98)).